A 146-amino-acid chain; its full sequence is Prefoldin subunit alpha 1 (146 aa).

Belongs to the prefoldin subunit alpha family. As to quaternary structure, heterohexamer of two alpha and four beta subunits.

The protein resides in the cytoplasm. In terms of biological role, molecular chaperone capable of stabilizing a range of proteins. Seems to fulfill an ATP-independent, HSP70-like function in archaeal de novo protein folding. The protein is Prefoldin subunit alpha 1 of Thermococcus kodakarensis (strain ATCC BAA-918 / JCM 12380 / KOD1) (Pyrococcus kodakaraensis (strain KOD1)).